The following is a 157-amino-acid chain: Transcription elongation factor GreA (157 aa).

Belongs to the GreA/GreB family.

Its function is as follows. Necessary for efficient RNA polymerase transcription elongation past template-encoded arresting sites. The arresting sites in DNA have the property of trapping a certain fraction of elongating RNA polymerases that pass through, resulting in locked ternary complexes. Cleavage of the nascent transcript by cleavage factors such as GreA or GreB allows the resumption of elongation from the new 3'terminus. GreA releases sequences of 2 to 3 nucleotides. The polypeptide is Transcription elongation factor GreA (Bartonella henselae (strain ATCC 49882 / DSM 28221 / CCUG 30454 / Houston 1) (Rochalimaea henselae)).